A 136-amino-acid polypeptide reads, in one-letter code: Protein LITTLE ZIPPER 1 (136 aa).

Residues 97–122 are a coiled coil; it reads ENQNIIRENEKLKKKALLLHQENKTL.

In terms of assembly, interacts with REV. As to expression, expressed in the adaxial epidermis of the cotyledons and in the vascular cylinder of wild-type torpedo stage embryos.

Functionally, competitive inhibitor of the HD-ZIPIII transcription factors in shoot apical meristem (SAM) development. Acts by forming non-functional heterodimers. Part of a negative feedback loop. Essential for proper functioning of stem cells in the SAM. The chain is Protein LITTLE ZIPPER 1 from Arabidopsis thaliana (Mouse-ear cress).